The chain runs to 428 residues: Putative zinc metalloprotease SACOL1281 (428 aa).

Zn(2+) is bound at residue H21. Residue E22 is part of the active site. H25 contributes to the Zn(2+) binding site. 4 helical membrane passes run 172 to 194, 309 to 331, 352 to 374, and 401 to 420; these read FLTL…IGLA, GSTY…GFSF, IISL…LIPI, and TTII…LVTW. The PDZ domain maps to 186–269; the sequence is ALVLFIGLAY…TKSVELTPKK (84 aa).

Belongs to the peptidase M50B family. Zn(2+) is required as a cofactor.

It is found in the cell membrane. This chain is Putative zinc metalloprotease SACOL1281, found in Staphylococcus aureus (strain COL).